Reading from the N-terminus, the 1201-residue chain is ATPase with bromodomain protein abo2 (1201 aa).

Disordered regions lie at residues Met-1–Pro-223 and Cys-305–Val-324. Over residues Asp-13–Tyr-24 the composition is skewed to acidic residues. Over residues His-29–Asn-38 the composition is skewed to basic and acidic residues. A compositionally biased stretch (polar residues) spans Phe-66–Lys-89. Positions Thr-129–Leu-146 are enriched in acidic residues. Residues Arg-212–Arg-221 are compositionally biased toward basic residues. Residues Glu-312–Asp-323 are compositionally biased toward low complexity. Gly-413–Thr-420 is a binding site for ATP. The Bromo domain occupies Lys-897–Leu-1026.

The protein belongs to the AAA ATPase family.

The protein resides in the nucleus. The catalysed reaction is ATP + H2O = ADP + phosphate + H(+). In terms of biological role, probable ATPase which may play a role in nucleosome organization. The protein is ATPase with bromodomain protein abo2 of Schizosaccharomyces pombe (strain 972 / ATCC 24843) (Fission yeast).